Consider the following 105-residue polypeptide: Nucleoid-associated protein TTHA1599 (105 aa).

Belongs to the YbaB/EbfC family. Homodimer.

It is found in the cytoplasm. The protein resides in the nucleoid. In terms of biological role, binds to DNA and alters its conformation. May be involved in regulation of gene expression, nucleoid organization and DNA protection. This Thermus thermophilus (strain ATCC 27634 / DSM 579 / HB8) protein is Nucleoid-associated protein TTHA1599.